A 223-amino-acid polypeptide reads, in one-letter code: Endonuclease V (223 aa).

Mg(2+) contacts are provided by D35 and D103.

It belongs to the endonuclease V family. It depends on Mg(2+) as a cofactor.

The protein resides in the cytoplasm. The catalysed reaction is Endonucleolytic cleavage at apurinic or apyrimidinic sites to products with a 5'-phosphate.. Its function is as follows. DNA repair enzyme involved in the repair of deaminated bases. Selectively cleaves double-stranded DNA at the second phosphodiester bond 3' to a deoxyinosine leaving behind the intact lesion on the nicked DNA. This is Endonuclease V from Klebsiella pneumoniae subsp. pneumoniae (strain ATCC 700721 / MGH 78578).